Here is a 557-residue protein sequence, read N- to C-terminus: Copine-4 (557 aa).

C2 domains are found at residues 3–131 and 137–264; these read KMSN…SKSL and TAGK…VQWE. 5 residues coordinate Ca(2+): aspartate 170, aspartate 176, aspartate 232, aspartate 234, and aspartate 240. In terms of domain architecture, VWFA spans 305-507; it reads QIQFTVAIDF…VLRDIVQFVP (203 aa).

The protein belongs to the copine family. In terms of assembly, interacts (via VWFA domain) with ACTB, BCOR, BICD2, CCDC22, CDC42BPB, CEP162, MYCBP2, NONO, PDCD6, PITPNM2, RDX, SKIL, SKT, SPTBN1, UBE2O and WTAP. It depends on Ca(2+) as a cofactor.

Probable calcium-dependent phospholipid-binding protein that may play a role in calcium-mediated intracellular processes. The chain is Copine-4 from Mus musculus (Mouse).